The primary structure comprises 1075 residues: Flocculation protein FLO5 (1075 aa).

The signal sequence occupies residues methionine 1 to glycine 24. The region spanning glycine 74–glycine 249 is the PA14 domain. Residues asparagine 135, asparagine 187, asparagine 203, and asparagine 262 are each glycosylated (N-linked (GlcNAc...) asparagine). The interval aspartate 197 to glycine 240 is sugar recognition. 8 tandem repeats follow at residues threonine 278–threonine 322, threonine 323–threonine 367, threonine 368–threonine 412, threonine 413–threonine 457, threonine 458–serine 502, threonine 503–threonine 547, threonine 548–threonine 592, and arginine 593–serine 637. The segment at threonine 278–serine 637 is 8 X 45 AA approximate tandem repeats, Thr-rich. Composition is skewed to low complexity over residues threonine 322–threonine 345, threonine 367–threonine 390, threonine 457–threonine 480, and threonine 547–threonine 570. Disordered stretches follow at residues threonine 322–proline 349, isoleucine 366–proline 394, isoleucine 456–proline 484, and isoleucine 546–proline 574. Residue asparagine 663 is glycosylated (N-linked (GlcNAc...) asparagine). 2 consecutive repeat copies span residues valine 667–serine 686 and phenylalanine 687–glutamate 706. Positions valine 667–glutamate 706 are 2 X 20 AA approximate tandem repeats, Ser-rich. The segment covering serine 702 to threonine 762 has biased composition (low complexity). The interval serine 702–glutamine 781 is disordered. Asparagine 749 carries an N-linked (GlcNAc...) asparagine glycan. The segment covering glycine 763–glutamine 781 has biased composition (polar residues). A run of 3 repeats spans residues threonine 775–serine 825, threonine 847–serine 897, and threonine 898–threonine 948. The tract at residues threonine 775–threonine 948 is 3 X 51 AA approximate repeats, Ser/Thr-rich. The span at threonine 948–methionine 958 shows a compositional bias: polar residues. Disordered regions lie at residues threonine 948 to serine 980 and serine 1016 to valine 1038. Low complexity-rich tracts occupy residues asparagine 959–alanine 977 and serine 1016–serine 1026. Polar residues predominate over residues glutamine 1027–valine 1038. The GPI-anchor amidated glycine moiety is linked to residue glycine 1052. Positions serine 1053–isoleucine 1075 are cleaved as a propeptide — removed in mature form.

This sequence belongs to the flocculin family. In terms of processing, extensively O-glycosylated. The GPI-anchor is attached to the protein in the endoplasmic reticulum and serves to target the protein to the cell surface. There, the glucosamine-inositol phospholipid moiety is cleaved off and the GPI-modified mannoprotein is covalently attached via its lipidless GPI glycan remnant to the 1,6-beta-glucan of the outer cell wall layer.

The protein resides in the secreted. It is found in the cell wall. The protein localises to the membrane. Functionally, cell wall protein that participates directly in adhesive cell-cell interactions during yeast flocculation, a reversible, asexual and Ca(2+)-dependent process in which cells adhere to form aggregates (flocs) consisting of thousands of cells. The lectin-like protein sticks out of the cell wall of flocculent cells and selectively binds mannose residues in the cell walls of adjacent cells. Activity is inhibited by mannose, but not by glucose, maltose, sucrose or galactose. This is Flocculation protein FLO5 (FLO5) from Saccharomyces cerevisiae (strain ATCC 204508 / S288c) (Baker's yeast).